Here is a 106-residue protein sequence, read N- to C-terminus: Molt-inhibiting hormone (106 aa).

Positions 1–29 (MVNQVAQCFTVRRVWLVVVVGLLVHQTTA) are cleaved as a signal peptide. 3 disulfides stabilise this stretch: cysteine 36–cysteine 73, cysteine 53–cysteine 69, and cysteine 56–cysteine 82. Alanine amide is present on alanine 104. A propeptide spanning residues 105-106 (GR) is cleaved from the precursor.

As to expression, sinus gland of the eyestalk.

Its subcellular location is the secreted. Functionally, inhibits Y-organs where molting hormone (ecdysteroid) is secreted. A molting cycle is initiated when MIH secretion diminishes or stops. The protein is Molt-inhibiting hormone of Faxonius limosus (Spinycheek crayfish).